The primary structure comprises 436 residues: uncharacterized protein (436 aa).

An N-terminal signal peptide occupies residues Met-1–Ala-19.

This is an uncharacterized protein from Rickettsia bellii (strain RML369-C).